An 89-amino-acid polypeptide reads, in one-letter code: Small ribosomal subunit protein uS15 (89 aa).

The protein belongs to the universal ribosomal protein uS15 family. Part of the 30S ribosomal subunit. Forms a bridge to the 50S subunit in the 70S ribosome, contacting the 23S rRNA.

One of the primary rRNA binding proteins, it binds directly to 16S rRNA where it helps nucleate assembly of the platform of the 30S subunit by binding and bridging several RNA helices of the 16S rRNA. In terms of biological role, forms an intersubunit bridge (bridge B4) with the 23S rRNA of the 50S subunit in the ribosome. This Bifidobacterium longum subsp. infantis (strain ATCC 15697 / DSM 20088 / JCM 1222 / NCTC 11817 / S12) protein is Small ribosomal subunit protein uS15.